The following is a 161-amino-acid chain: Lipoprotein signal peptidase (161 aa).

The next 2 membrane-spanning stretches (helical) occupy residues 64-84 and 92-114; these read YRVP…AWFY and VLGR…DRVR. Catalysis depends on residues D120 and D138. A helical membrane pass occupies residues 131-151; the sequence is WPAFNVADSAICVGVGMLLLA.

This sequence belongs to the peptidase A8 family.

The protein localises to the cell inner membrane. The enzyme catalyses Release of signal peptides from bacterial membrane prolipoproteins. Hydrolyzes -Xaa-Yaa-Zaa-|-(S,diacylglyceryl)Cys-, in which Xaa is hydrophobic (preferably Leu), and Yaa (Ala or Ser) and Zaa (Gly or Ala) have small, neutral side chains.. Its pathway is protein modification; lipoprotein biosynthesis (signal peptide cleavage). In terms of biological role, this protein specifically catalyzes the removal of signal peptides from prolipoproteins. The sequence is that of Lipoprotein signal peptidase from Syntrophotalea carbinolica (strain DSM 2380 / NBRC 103641 / GraBd1) (Pelobacter carbinolicus).